The following is a 257-amino-acid chain: Imidazole glycerol phosphate synthase subunit HisF (257 aa).

Catalysis depends on residues aspartate 12 and aspartate 131.

The protein belongs to the HisA/HisF family. As to quaternary structure, heterodimer of HisH and HisF.

The protein localises to the cytoplasm. It carries out the reaction 5-[(5-phospho-1-deoxy-D-ribulos-1-ylimino)methylamino]-1-(5-phospho-beta-D-ribosyl)imidazole-4-carboxamide + L-glutamine = D-erythro-1-(imidazol-4-yl)glycerol 3-phosphate + 5-amino-1-(5-phospho-beta-D-ribosyl)imidazole-4-carboxamide + L-glutamate + H(+). The protein operates within amino-acid biosynthesis; L-histidine biosynthesis; L-histidine from 5-phospho-alpha-D-ribose 1-diphosphate: step 5/9. In terms of biological role, IGPS catalyzes the conversion of PRFAR and glutamine to IGP, AICAR and glutamate. The HisF subunit catalyzes the cyclization activity that produces IGP and AICAR from PRFAR using the ammonia provided by the HisH subunit. The chain is Imidazole glycerol phosphate synthase subunit HisF from Cellvibrio japonicus (strain Ueda107) (Pseudomonas fluorescens subsp. cellulosa).